The following is a 243-amino-acid chain: Carboxy-S-adenosyl-L-methionine synthase (243 aa).

S-adenosyl-L-methionine-binding positions include tyrosine 35, 68 to 70 (GCS), 92 to 93 (DN), and arginine 199.

It belongs to the class I-like SAM-binding methyltransferase superfamily. Cx-SAM synthase family. As to quaternary structure, homodimer.

The enzyme catalyses prephenate + S-adenosyl-L-methionine = carboxy-S-adenosyl-L-methionine + 3-phenylpyruvate + H2O. Functionally, catalyzes the conversion of S-adenosyl-L-methionine (SAM) to carboxy-S-adenosyl-L-methionine (Cx-SAM). This chain is Carboxy-S-adenosyl-L-methionine synthase, found in Helicobacter pylori (strain ATCC 700392 / 26695) (Campylobacter pylori).